The primary structure comprises 481 residues: Glutamate-1-semialdehyde 2,1-aminomutase, chloroplastic (481 aa).

The interval 18 to 40 is disordered; sequence NQTPKWGFSPSHRRCNPSSSSSA. Position 321 is an N6-(pyridoxal phosphate)lysine (lysine 321).

Belongs to the class-III pyridoxal-phosphate-dependent aminotransferase family. HemL subfamily. As to quaternary structure, homodimer. It depends on pyridoxal 5'-phosphate as a cofactor.

It is found in the plastid. Its subcellular location is the chloroplast. The catalysed reaction is (S)-4-amino-5-oxopentanoate = 5-aminolevulinate. It functions in the pathway porphyrin-containing compound metabolism; protoporphyrin-IX biosynthesis; 5-aminolevulinate from L-glutamyl-tRNA(Glu): step 2/2. The protein operates within porphyrin-containing compound metabolism; chlorophyll biosynthesis. This chain is Glutamate-1-semialdehyde 2,1-aminomutase, chloroplastic, found in Solanum lycopersicum (Tomato).